The following is an 826-amino-acid chain: Eukaryotic translation initiation factor 3 subunit C (826 aa).

Disordered regions lie at residues Met1–Ala71 and Ser205–Lys227. The span at Asp10–Leu20 shows a compositional bias: acidic residues. Low complexity predominate over residues Tyr21–Asp30. A compositionally biased stretch (acidic residues) spans Ser32–Asp65. The segment covering Lys218–Lys227 has biased composition (basic and acidic residues). In terms of domain architecture, PCI spans Phe605–Gln779.

This sequence belongs to the eIF-3 subunit C family. In terms of assembly, component of the eukaryotic translation initiation factor 3 (eIF-3) complex.

The protein localises to the cytoplasm. Component of the eukaryotic translation initiation factor 3 (eIF-3) complex, which is involved in protein synthesis of a specialized repertoire of mRNAs and, together with other initiation factors, stimulates binding of mRNA and methionyl-tRNAi to the 40S ribosome. The eIF-3 complex specifically targets and initiates translation of a subset of mRNAs involved in cell proliferation. The protein is Eukaryotic translation initiation factor 3 subunit C of Yarrowia lipolytica (strain CLIB 122 / E 150) (Yeast).